Here is a 189-residue protein sequence, read N- to C-terminus: Shikimate kinase (189 aa).

ATP is bound at residue 22–27 (ASGKST). Ser-26 provides a ligand contact to Mg(2+). Asp-44, Arg-68, and Gly-90 together coordinate substrate. Arg-128 contacts ATP. Arg-147 provides a ligand contact to substrate.

Belongs to the shikimate kinase family. As to quaternary structure, monomer. Requires Mg(2+) as cofactor.

The protein resides in the cytoplasm. The catalysed reaction is shikimate + ATP = 3-phosphoshikimate + ADP + H(+). The protein operates within metabolic intermediate biosynthesis; chorismate biosynthesis; chorismate from D-erythrose 4-phosphate and phosphoenolpyruvate: step 5/7. In terms of biological role, catalyzes the specific phosphorylation of the 3-hydroxyl group of shikimic acid using ATP as a cosubstrate. The protein is Shikimate kinase of Synechococcus sp. (strain JA-3-3Ab) (Cyanobacteria bacterium Yellowstone A-Prime).